A 278-amino-acid polypeptide reads, in one-letter code: Elongation factor Ts (278 aa).

The segment at 79–82 is involved in Mg(2+) ion dislocation from EF-Tu; that stretch reads TDFV.

Belongs to the EF-Ts family.

It is found in the cytoplasm. Associates with the EF-Tu.GDP complex and induces the exchange of GDP to GTP. It remains bound to the aminoacyl-tRNA.EF-Tu.GTP complex up to the GTP hydrolysis stage on the ribosome. This is Elongation factor Ts from Borrelia hermsii (strain HS1 / DAH).